Reading from the N-terminus, the 163-residue chain is Jun dimerization protein 2 (163 aa).

2 disordered regions span residues 1–20 (MMPG…PGLG) and 59–89 (KRPQ…AARC). A Glycyl lysine isopeptide (Lys-Gly) (interchain with G-Cter in SUMO2) cross-link involves residue Lys-65. Residues 72-135 (EERRKRRREK…QQLILMLNRH (64 aa)) form the bZIP domain. The basic motif stretch occupies residues 74–96 (RRKRRREKNKVAAARCRNKKKER). The tract at residues 100 to 128 (LQRESERLELMNAELKTQIEELKLERQQL) is leucine-zipper. A Phosphothreonine; by MAPK8 modification is found at Thr-148.

This sequence belongs to the bZIP family. ATF subfamily. Forms a homodimer or heterodimer with JUN, JUNB, JUND, CEBPG and ATF2 thereby inhibiting transactivation by JUN, ATF2 and CEBPG. Binds multiple DNA elements such as cAMP-response element (CRE) and TPA response element (TRE) either as homodimer or heterodimer. Interacts with IRF2BP1. In terms of processing, phosphorylation of Thr-148 by MAPK8 in response to different stress conditions such as, UV irradiation, oxidatives stress and anisomycin treatments. Polyubiquitinated; probably by IRF2BP1. In terms of tissue distribution, ubiquitously expressed in all adult tissues tested as well in embryos.

It localises to the nucleus. Functionally, component of the AP-1 transcription factor that represses transactivation mediated by the Jun family of proteins. Involved in a variety of transcriptional responses associated with AP-1, such as UV-induced apoptosis, cell differentiation, tumorigenesis and antitumogeneris. Can also function as a repressor by recruiting histone deacetylase 3/HDAC3 to the promoter region of JUN. May control transcription via direct regulation of the modification of histones and the assembly of chromatin. The polypeptide is Jun dimerization protein 2 (Jdp2) (Mus musculus (Mouse)).